Here is a 140-residue protein sequence, read N- to C-terminus: Nucleoside diphosphate kinase (140 aa).

6 residues coordinate ATP: Lys-11, Phe-59, Arg-87, Thr-93, Arg-104, and Asn-114. The active-site Pros-phosphohistidine intermediate is His-117.

Belongs to the NDK family. Homotetramer. It depends on Mg(2+) as a cofactor.

The protein localises to the cytoplasm. It carries out the reaction a 2'-deoxyribonucleoside 5'-diphosphate + ATP = a 2'-deoxyribonucleoside 5'-triphosphate + ADP. The catalysed reaction is a ribonucleoside 5'-diphosphate + ATP = a ribonucleoside 5'-triphosphate + ADP. Major role in the synthesis of nucleoside triphosphates other than ATP. The ATP gamma phosphate is transferred to the NDP beta phosphate via a ping-pong mechanism, using a phosphorylated active-site intermediate. This chain is Nucleoside diphosphate kinase, found in Rhodospirillum centenum (strain ATCC 51521 / SW).